Here is a 323-residue protein sequence, read N- to C-terminus: Fructokinase-1 (323 aa).

This sequence belongs to the carbohydrate kinase PfkB family. As to expression, expressed in stems, at higher levels in roots, and hardly detectable in leaves.

It carries out the reaction D-fructose + ATP = D-fructose 6-phosphate + ADP + H(+). Its pathway is glycan biosynthesis; starch biosynthesis. Its activity is regulated as follows. Inhibited at high fructose. Its function is as follows. May play an important role in maintaining the flux of carbon towards starch formation in endosperm. May also be involved in a sugar-sensing pathway. This Zea mays (Maize) protein is Fructokinase-1 (FRK1).